The sequence spans 488 residues: Multidrug resistance outer membrane protein MdtP (488 aa).

The N-terminal stretch at 1–23 (MINRQLSRLLLCSILGSTTLISG) is a signal peptide. The N-palmitoyl cysteine moiety is linked to residue cysteine 24. Residue cysteine 24 is the site of S-diacylglycerol cysteine attachment.

It belongs to the outer membrane factor (OMF) (TC 1.B.17) family. As to quaternary structure, could be part of a tripartite efflux system composed of MdtN, MdtO and MdtP.

It localises to the cell outer membrane. Could be involved in resistance to puromycin, acriflavine and tetraphenylarsonium chloride. The sequence is that of Multidrug resistance outer membrane protein MdtP (mdtP) from Escherichia coli O6:H1 (strain CFT073 / ATCC 700928 / UPEC).